The following is a 538-amino-acid chain: CTP synthase (538 aa).

The interval 1–270 (MSRTKFIFVT…DEVVLKTMGM (270 aa)) is amidoligase domain. Position 15 (Ser-15) interacts with CTP. Ser-15 is a UTP binding site. 16-21 (SLGKGV) is an ATP binding site. Tyr-56 is a binding site for L-glutamine. ATP is bound at residue Asp-73. Mg(2+) contacts are provided by Asp-73 and Glu-143. CTP contacts are provided by residues 150–152 (DIE), 190–195 (KTKPTQ), and Lys-226. UTP contacts are provided by residues 190–195 (KTKPTQ) and Lys-226. The Glutamine amidotransferase type-1 domain maps to 295–537 (QIAVVGKYIS…IRASVKYSKK (243 aa)). Gly-357 contributes to the L-glutamine binding site. The active-site Nucleophile; for glutamine hydrolysis is the Cys-384. L-glutamine is bound by residues 385–388 (LGMQ), Glu-408, and Arg-465. Catalysis depends on residues His-510 and Glu-512.

The protein belongs to the CTP synthase family. As to quaternary structure, homotetramer.

It carries out the reaction UTP + L-glutamine + ATP + H2O = CTP + L-glutamate + ADP + phosphate + 2 H(+). The catalysed reaction is L-glutamine + H2O = L-glutamate + NH4(+). It catalyses the reaction UTP + NH4(+) + ATP = CTP + ADP + phosphate + 2 H(+). The protein operates within pyrimidine metabolism; CTP biosynthesis via de novo pathway; CTP from UDP: step 2/2. With respect to regulation, allosterically activated by GTP, when glutamine is the substrate; GTP has no effect on the reaction when ammonia is the substrate. The allosteric effector GTP functions by stabilizing the protein conformation that binds the tetrahedral intermediate(s) formed during glutamine hydrolysis. Inhibited by the product CTP, via allosteric rather than competitive inhibition. Functionally, catalyzes the ATP-dependent amination of UTP to CTP with either L-glutamine or ammonia as the source of nitrogen. Regulates intracellular CTP levels through interactions with the four ribonucleotide triphosphates. This Leptospira interrogans serogroup Icterohaemorrhagiae serovar copenhageni (strain Fiocruz L1-130) protein is CTP synthase.